The chain runs to 449 residues: Neurexin-1a-beta (449 aa).

The first 38 residues, 1 to 38 (MLRLWPGGAPGGLASILLRISLRLALWLPPLTLGSALA), serve as a signal peptide directing secretion. Over 39–373 (EGPGELYVPQ…EVIRESSSTT (335 aa)) the chain is Extracellular. The Laminin G-like domain occupies 71 to 272 (TTYIFGRDGG…DPNVRVEGSA (202 aa)). Residues 276–366 (GDMPSSSITP…AKGYPSPEVI (91 aa)) are disordered. Residues 280–311 (SSSITPQSSVSAAGNRSETSPSITDITTTTAS) show a composition bias toward low complexity. Positions 312-322 (NRQGKQTTTPQ) are enriched in polar residues. A helical membrane pass occupies residues 374–394 (GMVVGIVAAAALCILILLYAM). The Cytoplasmic segment spans residues 395–449 (YKYRNRDEGSYHVDESRNYISNSATQPNGAAVKEKPIGVPKNKKDKKNKDKEYYV). The tract at residues 415 to 449 (SNSATQPNGAAVKEKPIGVPKNKKDKKNKDKEYYV) is disordered.

Belongs to the neurexin family.

It localises to the membrane. In terms of biological role, neuronal cell surface protein that may be involved in cell recognition and cell adhesion. May play a role in formation or maintenance of synaptic junctions. In Danio rerio (Zebrafish), this protein is Neurexin-1a-beta (nrxn1a).